Consider the following 287-residue polypeptide: Nucleotide-binding protein VP2673 (287 aa).

8–15 (GHSGAGKS) lines the ATP pocket. Residue 56–59 (DIRN) participates in GTP binding.

It belongs to the RapZ-like family.

Functionally, displays ATPase and GTPase activities. This Vibrio parahaemolyticus serotype O3:K6 (strain RIMD 2210633) protein is Nucleotide-binding protein VP2673.